Consider the following 328-residue polypeptide: Sialic acid-binding Ig-like lectin 15 (328 aa).

The N-terminal stretch at 1 to 19 (MEKSIWLLACLAWVLPTGS) is a signal peptide. The Extracellular portion of the chain corresponds to 20-263 (FVRTKIDTTE…RFHGASGAST (244 aa)). The Ig-like V-type domain maps to 40-158 (PAQRWSMQVP…DVHDRYESRH (119 aa)). Cystine bridges form between cysteine 64–cysteine 142 and cysteine 95–cysteine 104. Arginine 143 contacts N-acetylneuraminate. In terms of domain architecture, Ig-like C2-type spans 168-251 (PRIVNISVLP…SLGRSEASVY (84 aa)). N-linked (GlcNAc...) asparagine glycosylation occurs at asparagine 172. A disulfide bridge links cysteine 187 with cysteine 237. A helical transmembrane segment spans residues 264–284 (VALLLGALGFKALLLLGVLAA). Topologically, residues 285–328 (RAARRRPEHLDTPDTPPRSQAQESNYENLSQMNPRSPPATMCSP) are cytoplasmic. Positions 289-328 (RRPEHLDTPDTPPRSQAQESNYENLSQMNPRSPPATMCSP) are disordered. Polar residues predominate over residues 301–318 (PRSQAQESNYENLSQMNP).

It belongs to the immunoglobulin superfamily. SIGLEC (sialic acid binding Ig-like lectin) family. Interacts with TYROBP and HCST. Expressed in macrophage and/or dendritic cells of spleen and lymph nodes.

It is found in the membrane. Functionally, binds sialylated glycoproteins. In Homo sapiens (Human), this protein is Sialic acid-binding Ig-like lectin 15 (SIGLEC15).